The following is a 519-amino-acid chain: 2-isopropylmalate synthase (519 aa).

Residues Val5–Tyr267 enclose the Pyruvate carboxyltransferase domain. 4 residues coordinate Mn(2+): Asp14, His202, His204, and Asn238. A regulatory domain region spans residues Ser392 to Lys519.

Belongs to the alpha-IPM synthase/homocitrate synthase family. LeuA type 1 subfamily. As to quaternary structure, homodimer. It depends on Mn(2+) as a cofactor.

The protein resides in the cytoplasm. It carries out the reaction 3-methyl-2-oxobutanoate + acetyl-CoA + H2O = (2S)-2-isopropylmalate + CoA + H(+). The protein operates within amino-acid biosynthesis; L-leucine biosynthesis; L-leucine from 3-methyl-2-oxobutanoate: step 1/4. Its function is as follows. Catalyzes the condensation of the acetyl group of acetyl-CoA with 3-methyl-2-oxobutanoate (2-ketoisovalerate) to form 3-carboxy-3-hydroxy-4-methylpentanoate (2-isopropylmalate). The sequence is that of 2-isopropylmalate synthase from Buchnera aphidicola subsp. Acyrthosiphon pisum (strain APS) (Acyrthosiphon pisum symbiotic bacterium).